A 544-amino-acid chain; its full sequence is Probable protein kinase UbiB (544 aa).

A Protein kinase domain is found at 123–501 (EFDIKPLASA…KRQQATGKFL (379 aa)). ATP contacts are provided by residues 129-137 (LASASIAQV) and Lys152. The active-site Proton acceptor is the Asp287. A run of 2 helical transmembrane segments spans residues 496–516 (ATGKFLFGVGATLVVCSAILV) and 519–539 (AYEQLSMASGIAGVTFWLLSW).

It belongs to the ABC1 family. UbiB subfamily.

It localises to the cell inner membrane. It participates in cofactor biosynthesis; ubiquinone biosynthesis [regulation]. Is probably a protein kinase regulator of UbiI activity which is involved in aerobic coenzyme Q (ubiquinone) biosynthesis. In Vibrio parahaemolyticus serotype O3:K6 (strain RIMD 2210633), this protein is Probable protein kinase UbiB.